The sequence spans 396 residues: Phosphoglycerate kinase (396 aa).

Residues 24-26 (DFN), R39, 62-65 (HLGR), R120, and R153 contribute to the substrate site. ATP is bound by residues K203, G294, E325, and 352-355 (GGDS).

It belongs to the phosphoglycerate kinase family. As to quaternary structure, monomer.

It is found in the cytoplasm. The enzyme catalyses (2R)-3-phosphoglycerate + ATP = (2R)-3-phospho-glyceroyl phosphate + ADP. Its pathway is carbohydrate degradation; glycolysis; pyruvate from D-glyceraldehyde 3-phosphate: step 2/5. This Dictyoglomus turgidum (strain DSM 6724 / Z-1310) protein is Phosphoglycerate kinase.